The chain runs to 122 residues: MIQQESRLKVADNTGAKELLTIRVLGGSGRRYAGLGDVIVATVKDAIPGGNVKKGDVVKAVIVRTRKNTRRTDGSYIKFDENAAVILKNDGDPRGTRIFGPVGRELRDKKFMKIISLAPEVL.

This sequence belongs to the universal ribosomal protein uL14 family. As to quaternary structure, part of the 50S ribosomal subunit. Forms a cluster with proteins L3 and L19. In the 70S ribosome, L14 and L19 interact and together make contacts with the 16S rRNA in bridges B5 and B8.

Its function is as follows. Binds to 23S rRNA. Forms part of two intersubunit bridges in the 70S ribosome. The chain is Large ribosomal subunit protein uL14 from Leifsonia xyli subsp. xyli (strain CTCB07).